We begin with the raw amino-acid sequence, 20 residues long: Cytochrome c oxidase subunit 5A-1, mitochondrial (20 aa).

This sequence belongs to the cytochrome c oxidase subunit 5A family. Component of the cytochrome c oxidase (complex IV, CIV), a multisubunit enzyme composed of 14 subunits. The complex is composed of a catalytic core of 3 subunits MT-CO1, MT-CO2 and MT-CO3, encoded in the mitochondrial DNA, and 11 supernumerary subunits COX4I, COX5A, COX5B, COX6A, COX6B, COX6C, COX7A, COX7B, COX7C, COX8 and NDUFA4, which are encoded in the nuclear genome. The complex exists as a monomer or a dimer and forms supercomplexes (SCs) in the inner mitochondrial membrane with NADH-ubiquinone oxidoreductase (complex I, CI) and ubiquinol-cytochrome c oxidoreductase (cytochrome b-c1 complex, complex III, CIII), resulting in different assemblies (supercomplex SCI(1)III(2)IV(1) and megacomplex MCI(2)III(2)IV(2)). Interacts with AFG1L. Interacts with RAB5IF.

The protein localises to the mitochondrion inner membrane. The protein operates within energy metabolism; oxidative phosphorylation. Component of the cytochrome c oxidase, the last enzyme in the mitochondrial electron transport chain which drives oxidative phosphorylation. The respiratory chain contains 3 multisubunit complexes succinate dehydrogenase (complex II, CII), ubiquinol-cytochrome c oxidoreductase (cytochrome b-c1 complex, complex III, CIII) and cytochrome c oxidase (complex IV, CIV), that cooperate to transfer electrons derived from NADH and succinate to molecular oxygen, creating an electrochemical gradient over the inner membrane that drives transmembrane transport and the ATP synthase. Cytochrome c oxidase is the component of the respiratory chain that catalyzes the reduction of oxygen to water. Electrons originating from reduced cytochrome c in the intermembrane space (IMS) are transferred via the dinuclear copper A center (CU(A)) of subunit 2 and heme A of subunit 1 to the active site in subunit 1, a binuclear center (BNC) formed by heme A3 and copper B (CU(B)). The BNC reduces molecular oxygen to 2 water molecules using 4 electrons from cytochrome c in the IMS and 4 protons from the mitochondrial matrix. The polypeptide is Cytochrome c oxidase subunit 5A-1, mitochondrial (Thunnus obesus (Bigeye tuna)).